A 130-amino-acid chain; its full sequence is Small ribosomal subunit protein uS9 (130 aa).

The protein belongs to the universal ribosomal protein uS9 family.

The chain is Small ribosomal subunit protein uS9 from Haemophilus influenzae (strain 86-028NP).